Reading from the N-terminus, the 84-residue chain is Small ribosomal subunit protein bS16 (84 aa).

Belongs to the bacterial ribosomal protein bS16 family.

The chain is Small ribosomal subunit protein bS16 from Cupriavidus pinatubonensis (strain JMP 134 / LMG 1197) (Cupriavidus necator (strain JMP 134)).